Reading from the N-terminus, the 389-residue chain is MTMQHVFPTYQRFPFAITDGQGVHLTDNHGKTYLDFTAGIGVCNFGYHQPQIQAAVTQQLTHIWHTSNLYENELQDAVAGLLANGEERLVYFANSGTEANEAALKLARKYTGKTGILAFQHSFHGRTYGAMSMTGNPHIQAGYAPLVPGITFATYNDDAALDKITPELAAVILEVVQGEGGVFAGQTAWLQAVNAKCQATGVLLIIDEVQTGIGRTGYRMAYEGYGLDPDIYTVAKGLANGLPVGAMVGRRQLATAFGPGSHGSTFAGNAVAMAAAKCVLPQLTPALLTTVRAHAKLVWQSLATQVEPIPVVKQITGKGLMIGIHLDEQIPVNQVITRLQVEGLLTLSAGDNTLRLLPPIVMQPADLLAGIALIAKVLTTLTTEVTTNE.

Pyridoxal 5'-phosphate-binding positions include 96-97 (GT) and F123. R126 is a N(2)-acetyl-L-ornithine binding site. 207–210 (DEVQ) contributes to the pyridoxal 5'-phosphate binding site. K236 carries the post-translational modification N6-(pyridoxal phosphate)lysine. Residue S264 participates in N(2)-acetyl-L-ornithine binding. Pyridoxal 5'-phosphate is bound at residue T265.

Belongs to the class-III pyridoxal-phosphate-dependent aminotransferase family. ArgD subfamily. Homodimer. Requires pyridoxal 5'-phosphate as cofactor.

Its subcellular location is the cytoplasm. It carries out the reaction N(2)-acetyl-L-ornithine + 2-oxoglutarate = N-acetyl-L-glutamate 5-semialdehyde + L-glutamate. It participates in amino-acid biosynthesis; L-arginine biosynthesis; N(2)-acetyl-L-ornithine from L-glutamate: step 4/4. This chain is Acetylornithine aminotransferase, found in Lactiplantibacillus plantarum (strain ATCC BAA-793 / NCIMB 8826 / WCFS1) (Lactobacillus plantarum).